A 269-amino-acid chain; its full sequence is Regulatory protein RecX (269 aa).

Belongs to the RecX family.

Its subcellular location is the cytoplasm. Functionally, modulates RecA activity. The sequence is that of Regulatory protein RecX from Lactococcus lactis subsp. cremoris (strain MG1363).